The primary structure comprises 206 residues: MSETRPDCDEVVLLGRSNVGKSTLMRELTGHTGFTTGRKPGVTRSPNHYDWASESFMFTDLPGFGFMSGVESSQREQIKTDIVRYIESNAESILAAVLVVDGKSAVEIIDRHSGPDEIPHDIELFSFLWELDLPTVVAVNKIDKVENKDNQLDDLCDRLGLYPPWQQWQDTIAPISAKRGSIEPLEEALQAIFSDQRRDDLLKFVT.

The 189-residue stretch at 7–195 (DCDEVVLLGR…EEALQAIFSD (189 aa)) folds into the EngB-type G domain. GTP contacts are provided by residues 15–22 (GRSNVGKS), 41–45 (GVTRS), 60–63 (DLPG), 140–143 (NKID), and 175–177 (ISA). 2 residues coordinate Mg(2+): serine 22 and threonine 43.

Belongs to the TRAFAC class TrmE-Era-EngA-EngB-Septin-like GTPase superfamily. EngB GTPase family. Requires Mg(2+) as cofactor.

Its function is as follows. Necessary for normal cell division and for the maintenance of normal septation. The sequence is that of Probable GTP-binding protein EngB from Haloquadratum walsbyi (strain DSM 16790 / HBSQ001).